The sequence spans 679 residues: PHD finger protein PERSISTENT TAPETAL CELL 1 (679 aa).

The PHD-type zinc-finger motif lies at 620-670; the sequence is VVDCACGAVDDDGERMACCDICEAWQHTRCAGIADTEDAPHVFLCSRCDND.

Its function is as follows. Probable transcriptional activator required for tapetal programmed cell death (PCD) and degeneration, and pollen development in anthers. The protein is PHD finger protein PERSISTENT TAPETAL CELL 1 of Oryza sativa subsp. japonica (Rice).